A 410-amino-acid polypeptide reads, in one-letter code: LL-diaminopimelate aminotransferase (410 aa).

Y15 and G42 together coordinate substrate. Pyridoxal 5'-phosphate contacts are provided by residues Y72, 108 to 109, Y132, N187, Y218, and 246 to 248; these read SK and SFS. 3 residues coordinate substrate: K109, Y132, and N187. K249 carries the N6-(pyridoxal phosphate)lysine modification. Pyridoxal 5'-phosphate contacts are provided by R257 and N292. Substrate-binding residues include N292 and R388.

It belongs to the class-I pyridoxal-phosphate-dependent aminotransferase family. LL-diaminopimelate aminotransferase subfamily. As to quaternary structure, homodimer. Requires pyridoxal 5'-phosphate as cofactor.

The catalysed reaction is (2S,6S)-2,6-diaminopimelate + 2-oxoglutarate = (S)-2,3,4,5-tetrahydrodipicolinate + L-glutamate + H2O + H(+). It participates in amino-acid biosynthesis; L-lysine biosynthesis via DAP pathway; LL-2,6-diaminopimelate from (S)-tetrahydrodipicolinate (aminotransferase route): step 1/1. Functionally, involved in the synthesis of meso-diaminopimelate (m-DAP or DL-DAP), required for both lysine and peptidoglycan biosynthesis. Catalyzes the direct conversion of tetrahydrodipicolinate to LL-diaminopimelate. This Geotalea uraniireducens (strain Rf4) (Geobacter uraniireducens) protein is LL-diaminopimelate aminotransferase.